A 528-amino-acid polypeptide reads, in one-letter code: MSRKRNHCYMETGASSESQGAFVDSAGPFSRDEEDFSELEPDEQLVCSVTEITEHLGRNITVVLESALSEIRKLVGVRIRVLKMELREKSDEIELLKAKLESAEKDGRVSNFSSLDFRKSEHQKYGAEPKKAKTGTPVVKKENINAICDYLMKDKNQRGAAEVESDHSNQAFGSERDVRTEAQPHGSLSLWPDSGPADTDAETDIFSMLPSASKRMYDYEWMTGVELNSAEFKGDSETKCEDVPPMDEEDENEDSEEGRGSLRSVSDHFPLDTQGSPGEDRSSPAEDSMDRMEPGQQFTSHTFICPFCGTLCPDSSFLEEHIKLMHHGESLLQSTSAGSSSQAEGDSGEAGPASRGAREKKVEGGYECGDCGRHFNYLGNLRQHQRIHTGEKPFVCPECGERFRHTARLKSHRLSHSGAQSPFPCPQCGKGFPVLSGLKRHQRVHTGESPYACPQCGRRFKELGNLYTHMRIHSGATPYTCYQCGRSFRHLGTYKSHRCMPATQMPSEHSPPWAQEDKVQTGRLQGYV.

Residues 1 to 28 are disordered; the sequence is MSRKRNHCYMETGASSESQGAFVDSAGP. Residues 79-106 adopt a coiled-coil conformation; the sequence is IRVLKMELREKSDEIELLKAKLESAEKD. 2 disordered regions span residues 159–202 and 232–293; these read GAAE…TDAE and FKGD…DRME. Positions 232–242 are enriched in basic and acidic residues; it reads FKGDSETKCED. Residues 244–256 show a composition bias toward acidic residues; it reads PPMDEEDENEDSE. Basic and acidic residues-rich tracts occupy residues 257-270 and 278-293; these read EGRGSLRSVSDHFP and GEDRSSPAEDSMDRME. The segment at 303–326 adopts a C2H2-type 1 zinc-finger fold; the sequence is FICPFCGTLCPDSSFLEEHIKLMH. Positions 333 to 345 are enriched in low complexity; that stretch reads QSTSAGSSSQAEG. The disordered stretch occupies residues 333–359; sequence QSTSAGSSSQAEGDSGEAGPASRGARE. 4 consecutive C2H2-type zinc fingers follow at residues 366-388, 394-416, 423-445, and 451-473; these read YECGDCGRHFNYLGNLRQHQRIH, FVCPECGERFRHTARLKSHRLSH, FPCPQCGKGFPVLSGLKRHQRVH, and YACPQCGRRFKELGNLYTHMRIH. The C2H2-type 6; degenerate zinc finger occupies 479 to 501; that stretch reads YTCYQCGRSFRHLGTYKSHRCMP. The interval 502–528 is disordered; sequence ATQMPSEHSPPWAQEDKVQTGRLQGYV.

This sequence belongs to the krueppel C2H2-type zinc-finger protein family.

The protein resides in the nucleus. Its function is as follows. Probable transcription factor. Important for development and migration of oligodendrocyte precursor cells, and normal myelination of axons in the central nervous system (CNS). Functions autonomously in oligodendrocytes to promote CNS myelination. Seems to act in parallel with notch3 during oligodendrocyte development. This is Zinc finger protein 16-like from Danio rerio (Zebrafish).